The primary structure comprises 483 residues: MTGLGKRRPARSRSGVSGLRERRQPASVERSAGSEGRRELVIQGLAHDGRGVARDVDGKTVFVEGALPGERVQASVHRRRKRFDEAHVSEVIAASASRVAPPCRHYGSCGGCDLQHLSLEAQRDHKREVLRELLARQGIELPGASSLLADAGEGYRRRARIGVRVDSNGQVRLGFRARHSHRLVDLDDCPVLLPALSSLLRPLREQVESLEAPRHVGHLELLASDGAVTLVVRQLREHVADQRRWRAFAEAQGLHLGAWLGRESPRFEWLTPPPALHCRLTAGRRTLVLGLEPSDFLQANEAVNQRMVDTALSWLAPALSPVAPGTRVLDLFAGIGNFSLPLATQGAEVSAVEGSTAMVERLAGNAARNQVAVTARQADLNDAEACRRLLATTAPEVLVLDPPRSGAEALCRQLVEHPVPWVLYISCDPATLARDAAWLVSAGYVVRRSAVADMFAHTSHLESMLLLEHPDSARRQQGASTDG.

Basic residues predominate over residues 1 to 11 (MTGLGKRRPAR). Positions 1-36 (MTGLGKRRPARSRSGVSGLRERRQPASVERSAGSEG) are disordered. The 62-residue stretch at 29–90 (ERSAGSEGRR…KRFDEAHVSE (62 aa)) folds into the TRAM domain. 4 residues coordinate [4Fe-4S] cluster: Cys-103, Cys-109, Cys-112, and Cys-189. Positions 298, 332, 337, 353, 379, and 401 each coordinate S-adenosyl-L-methionine. Cys-427 (nucleophile) is an active-site residue.

The protein belongs to the class I-like SAM-binding methyltransferase superfamily. RNA M5U methyltransferase family. RlmD subfamily.

The catalysed reaction is uridine(1939) in 23S rRNA + S-adenosyl-L-methionine = 5-methyluridine(1939) in 23S rRNA + S-adenosyl-L-homocysteine + H(+). Catalyzes the formation of 5-methyl-uridine at position 1939 (m5U1939) in 23S rRNA. The sequence is that of 23S rRNA (uracil(1939)-C(5))-methyltransferase RlmD from Halomonas elongata (strain ATCC 33173 / DSM 2581 / NBRC 15536 / NCIMB 2198 / 1H9).